A 97-amino-acid chain; its full sequence is UPF0235 protein HD_0778 (97 aa).

Belongs to the UPF0235 family.

This chain is UPF0235 protein HD_0778, found in Haemophilus ducreyi (strain 35000HP / ATCC 700724).